Here is an 810-residue protein sequence, read N- to C-terminus: Protein kinase C-binding protein NELL1 (810 aa).

The N-terminal stretch at 1-21 (MPMDVILVLWFCVCTARTVLG) is a signal peptide. N40, N53, N83, N224, N294, and N372 each carry an N-linked (GlcNAc...) asparagine glycan. One can recognise a Laminin G-like domain in the interval 57–227 (AFLFQDVQRE…TQCPNLNRTC (171 aa)). One can recognise a VWFC 1 domain in the interval 271-332 (KTCQVSGLLY…ISGQCCKVCR (62 aa)). 3 disulfides stabilise this stretch: C395/C407, C401/C416, and C418/C432. Ca(2+)-binding residues include D434, I435, and E437. An EGF-like 1; calcium-binding domain is found at 434-475 (DIDECAAKMHYCHANTVCVNLPGLYRCDCIPGYIRVDDFSCT). 15 cysteine pairs are disulfide-bonded: C438–C451, C445–C460, C462–C474, C480–C493, C487–C502, C504–C515, C519–C529, C523–C535, C537–C546, C553–C566, C560–C575, C577–C594, C600–C613, C607–C622, and C624–C630. Residues N453, L454, and L457 each contribute to the Ca(2+) site. One can recognise an EGF-like 2; calcium-binding domain in the interval 476–516 (EHDDCGSGQHNCDKNAICTNTVQGHSCTCQPGYVGNGTVCK). N511 carries N-linked (GlcNAc...) asparagine glycosylation. The EGF-like 3 domain occupies 517 to 547 (AFCEEGCRYGGTCVAPNKCVCPSGFTGSHCE). Residues 549–587 (DIDECAEGFVECHNHSRCVNLPGWYHCECRSGFHDDGTY) enclose the EGF-like 4; calcium-binding domain. N562 carries N-linked (GlcNAc...) asparagine glycosylation. One can recognise an EGF-like 5; calcium-binding domain in the interval 596–631 (DIDECALRTHTCWNDSACINLAGGFDCLCPSGPSCS). The N-linked (GlcNAc...) asparagine glycan is linked to N609. VWFC domains are found at residues 632–687 (GDCP…PECD) and 692–750 (SQCL…PRCV). An N-linked (GlcNAc...) asparagine glycan is attached at N708.

In terms of assembly, homotrimer. Binds to PKC beta-1. Interacts with ATRAID; the interaction promotes osteoblast cell differentiation and mineralization. Interacts with ROBO3.

Its subcellular location is the cytoplasm. The protein localises to the nucleus envelope. It is found in the secreted. Plays a role in the control of cell growth and differentiation. Promotes osteoblast cell differentiation and terminal mineralization. The polypeptide is Protein kinase C-binding protein NELL1 (Nell1) (Mus musculus (Mouse)).